The following is a 286-amino-acid chain: 2-dehydro-3-deoxyphosphooctonate aldolase (286 aa).

The protein belongs to the KdsA family.

The protein resides in the cytoplasm. The enzyme catalyses D-arabinose 5-phosphate + phosphoenolpyruvate + H2O = 3-deoxy-alpha-D-manno-2-octulosonate-8-phosphate + phosphate. The protein operates within carbohydrate biosynthesis; 3-deoxy-D-manno-octulosonate biosynthesis; 3-deoxy-D-manno-octulosonate from D-ribulose 5-phosphate: step 2/3. It participates in bacterial outer membrane biogenesis; lipopolysaccharide biosynthesis. This chain is 2-dehydro-3-deoxyphosphooctonate aldolase, found in Bradyrhizobium sp. (strain BTAi1 / ATCC BAA-1182).